The following is a 319-amino-acid chain: Protoheme IX farnesyltransferase (319 aa).

The next 8 helical transmembrane spans lie at 59–79 (IGLILATLVGGAFAAGSAGAF), 108–128 (EALVFSWLLGAAAIAILWFGA), 131–151 (LSAWLGLGAIFFYVVIYTIIL), 158–178 (NIVWGGAAGCFPVLIAWAAVT), 183–203 (WPAIILFMVIFLWTPPHYWPL), 232–252 (VVLYAWAMVACSLLMVPAGGA), 254–274 (WVYTVTAVLAGAWFLYESHAL), and 299–319 (LTLLFIALAVDPFVGPAVIGG).

It belongs to the UbiA prenyltransferase family. Protoheme IX farnesyltransferase subfamily.

Its subcellular location is the cell membrane. The catalysed reaction is heme b + (2E,6E)-farnesyl diphosphate + H2O = Fe(II)-heme o + diphosphate. It functions in the pathway porphyrin-containing compound metabolism; heme O biosynthesis; heme O from protoheme: step 1/1. Functionally, converts heme B (protoheme IX) to heme O by substitution of the vinyl group on carbon 2 of heme B porphyrin ring with a hydroxyethyl farnesyl side group. The protein is Protoheme IX farnesyltransferase of Pseudarthrobacter chlorophenolicus (strain ATCC 700700 / DSM 12829 / CIP 107037 / JCM 12360 / KCTC 9906 / NCIMB 13794 / A6) (Arthrobacter chlorophenolicus).